We begin with the raw amino-acid sequence, 139 residues long: Cytochrome c-type biogenesis protein CcmE 2 (139 aa).

At 1–9 (MASLKKSRR) the chain is on the cytoplasmic side. A helical; Signal-anchor for type II membrane protein membrane pass occupies residues 10 to 30 (VRLILFSGVALVSATALIGYA). Over 31–139 (MRDGIQFFRT…ELAEMEALRD (109 aa)) the chain is Periplasmic. 2 residues coordinate heme: H122 and Y126.

The protein belongs to the CcmE/CycJ family.

The protein resides in the cell inner membrane. Functionally, heme chaperone required for the biogenesis of c-type cytochromes. Transiently binds heme delivered by CcmC and transfers the heme to apo-cytochromes in a process facilitated by CcmF and CcmH. The polypeptide is Cytochrome c-type biogenesis protein CcmE 2 (Ruegeria pomeroyi (strain ATCC 700808 / DSM 15171 / DSS-3) (Silicibacter pomeroyi)).